A 749-amino-acid polypeptide reads, in one-letter code: MGRVVGIDLGTTNSVIAVMEGGKPMVIANAEGVRTTPSVVGVSKTGERLVGELARRQLVLNPRNTFANIKRFIGRRYDELTDESKRVPYTVRRDPEGNVRIVCPQLSREFAPEEVAAMILRKLAEEASRYLGEPVTGAVITVPAYFNDSQRQATRDAGRIAGLEVKRILNEPTAASLAYGLDRRDNQTILVFDLGGGTFDVSVLEVGNGVFEVKATSGDTQLGGNDFDRRIVDWLAEQFLEAEGIDLRRDRQALQRLIEAAEKAKIELSGVSVTDINLPFITATEDEPKHLETRLTRSEFEALCEDLLERMMRPLRRALKDARLQPQDIDEVVLVGGSTRMPMVQQLVRSLIGREPNQNVNPDEVVAIGAAIQAGILAGEVKDILLLDVTPLSLGLETIGGVMKKLIPRNTAIPVRRSDIFSTAENNQTMVEIHILQGERQLAEGNKSLGRFKLTGIPPAPRGVPQVQVSFDIDANGILQVSALDKTTGREQTVTIQGASTLSQEEVKRMMKDAELYAQQDRQLKARIEKRNRAQTLIAQSERRLREISLDFGLYFAESKRRRIESTIRELKDYLERQDDRGLDLALAELQDALFDLNQETAARLRDEEGEGFFEPLKQTFASLRGDGNRDFERSWDDRGGDRWDADPWDRSRRSTPSYGYDDRRSPVSDPYRGERWVEEQTSMSRREPVRDRNGGNGSVRPEPAPRRGRPTWEEDQPPRRDRSSQPPAKPASGRRWNDGWDDDDDEWF.

Threonine 198 carries the post-translational modification Phosphothreonine; by autocatalysis. Basic and acidic residues-rich tracts occupy residues 643–653 (RWDADPWDRSR), 661–694 (YDDR…RDRN), and 711–724 (PTWE…RDRS). The segment at 643 to 749 (RWDADPWDRS…GWDDDDDEWF (107 aa)) is disordered. Positions 740 to 749 (GWDDDDDEWF) are enriched in acidic residues.

It belongs to the heat shock protein 70 family.

Functionally, acts as a chaperone. The chain is Chaperone protein DnaK 1 from Synechococcus sp. (strain ATCC 27144 / PCC 6301 / SAUG 1402/1) (Anacystis nidulans).